A 528-amino-acid chain; its full sequence is Protein phosphatase 1 regulatory subunit 16A (528 aa).

Residues 18-45 (STQERLKHAQKRRAQQVKMWAQAEKEAQ) adopt a coiled-coil conformation. Positions 19-59 (TQERLKHAQKRRAQQVKMWAQAEKEAQGKKGPGERPRKEAA) are disordered. The segment covering 40-58 (AEKEAQGKKGPGERPRKEA) has biased composition (basic and acidic residues). ANK repeat units follow at residues 70–99 (PPSV…SPDL), 103–132 (DGLT…NINA), 136–165 (ECWT…NLLA), 231–260 (HGAT…SLSA), and 264–293 (DGWE…DLNA). Disordered regions lie at residues 330-351 (RQRS…VVRR) and 367-421 (QEAI…SPVR). A Phosphoserine modification is found at serine 433. The tract at residues 462–505 (QRAAAKLQRPPPEGPESPETAEPGLPGDTVTPQPDCGFRAGGDP) is disordered. A lipid anchor (S-palmitoyl cysteine) is attached at cysteine 524. Cysteine 525 is subject to Cysteine methyl ester. The S-farnesyl cysteine moiety is linked to residue cysteine 525. A propeptide spans 526 to 528 (LLM) (removed in mature form).

As to quaternary structure, binds PP1.

It is found in the cell membrane. Inhibits protein phosphatase 1 activity toward phosphorylase, myosin light chain and myosin substrates. The polypeptide is Protein phosphatase 1 regulatory subunit 16A (PPP1R16A) (Homo sapiens (Human)).